The following is a 522-amino-acid chain: Maturase K (522 aa).

Belongs to the intron maturase 2 family. MatK subfamily.

The protein localises to the plastid. It localises to the chloroplast. Usually encoded in the trnK tRNA gene intron. Probably assists in splicing its own and other chloroplast group II introns. This is Maturase K from Iris tenax (Oregon iris).